Reading from the N-terminus, the 345-residue chain is Protein PXR1 (345 aa).

Disordered regions lie at residues 1–25 (MGLA…SNNN) and 166–317 (VEDE…ASRL). The G-patch domain occupies 25-71 (NNQFGHQYLTKMGWTPGKGIGLVPDSITTHLKINIKTDNAGLGAKLQ). Over residues 187–227 (KKEKKEKKEKKEKKEKKEKKEKKEKKEKKEKKEKKEKKEKK) the composition is skewed to basic residues. Residues 228 to 237 (EKKEKSDKKE) are compositionally biased toward basic and acidic residues. The segment covering 238–278 (KKEKKDKKEKKEKKEKKEKKEKKEKKEKKEKKEKKEKKEKK) has biased composition (basic residues). Basic and acidic residues predominate over residues 279-288 (EKKDKLDKES). Residues 289–312 (SNAANVESTKSLVSDSSRESTPTP) show a composition bias toward polar residues.

The protein belongs to the PINX1 family.

It localises to the nucleus. Its subcellular location is the nucleolus. Functionally, involved in rRNA-processing at A0, A1 and A2 sites and negatively regulates telomerase. The protein is Protein PXR1 (PXR1) of Lodderomyces elongisporus (strain ATCC 11503 / CBS 2605 / JCM 1781 / NBRC 1676 / NRRL YB-4239) (Yeast).